Here is a 539-residue protein sequence, read N- to C-terminus: Squalene monooxygenase SE1 (539 aa).

2 helical membrane passes run 22–42 (LLID…FLLL) and 71–91 (IAGS…ALAY). Residues 84-85 (VA), 104-105 (ER), Arg112, Arg183, Val199, Asp361, and Met374 each bind FAD. The helical transmembrane segment at 472–492 (LFLHFFAVAIYGVGRLLIPFP) threads the bilayer.

Belongs to the squalene monooxygenase family. It depends on FAD as a cofactor. As to expression, mostly expressed in flower buds and leaves, and, to a lower extent, at high levels thought, in roots and petioles. In petioles, preferentially observed in vascular bundle tissue (phloem cells and parenchymatous cells near xylem) and resin ducts.

The protein resides in the microsome membrane. It is found in the endoplasmic reticulum membrane. The enzyme catalyses squalene + reduced [NADPH--hemoprotein reductase] + O2 = (S)-2,3-epoxysqualene + oxidized [NADPH--hemoprotein reductase] + H2O + H(+). The protein operates within terpene metabolism; lanosterol biosynthesis; lanosterol from farnesyl diphosphate: step 2/3. Component of the triterpene saponins (e.g. ginsenosides or panaxosides) and phytosterols biosynthetic pathways. Catalyzes the first oxygenation step in sterol biosynthesis and is suggested to be one of the rate-limiting enzymes in this pathway. The polypeptide is Squalene monooxygenase SE1 (Panax ginseng (Korean ginseng)).